A 216-amino-acid chain; its full sequence is DNA replication complex GINS protein psf1 (216 aa).

Positions glutamine 110–proline 133 are disordered. A compositionally biased stretch (gly residues) spans threonine 111–threonine 127.

This sequence belongs to the GINS1/PSF1 family. As to quaternary structure, component of the GINS complex which is a heterotetramer of div-26/sld5, drc-1/psf1, drc-2/psf2 and drc-3/psf3.

The protein localises to the nucleus. In terms of biological role, the GINS complex plays an essential role in the initiation of DNA replication. This is DNA replication complex GINS protein psf1 (drc-1) from Neurospora crassa (strain ATCC 24698 / 74-OR23-1A / CBS 708.71 / DSM 1257 / FGSC 987).